Reading from the N-terminus, the 75-residue chain is ATP synthase subunit c (75 aa).

The next 2 helical transmembrane spans lie at 13–33 and 55–75; these read LSVIGYGIGTLGPGIGLGILF and FIGLALVEVLALIGFVAALII.

It belongs to the ATPase C chain family. F-type ATPases have 2 components, F(1) - the catalytic core - and F(0) - the membrane proton channel. F(1) has five subunits: alpha(3), beta(3), gamma(1), delta(1), epsilon(1). F(0) has three main subunits: a(1), b(2) and c(10-14). The alpha and beta chains form an alternating ring which encloses part of the gamma chain. F(1) is attached to F(0) by a central stalk formed by the gamma and epsilon chains, while a peripheral stalk is formed by the delta and b chains.

Its subcellular location is the cell membrane. In terms of biological role, f(1)F(0) ATP synthase produces ATP from ADP in the presence of a proton or sodium gradient. F-type ATPases consist of two structural domains, F(1) containing the extramembraneous catalytic core and F(0) containing the membrane proton channel, linked together by a central stalk and a peripheral stalk. During catalysis, ATP synthesis in the catalytic domain of F(1) is coupled via a rotary mechanism of the central stalk subunits to proton translocation. Its function is as follows. Key component of the F(0) channel; it plays a direct role in translocation across the membrane. A homomeric c-ring of between 10-14 subunits forms the central stalk rotor element with the F(1) delta and epsilon subunits. This Bifidobacterium longum (strain DJO10A) protein is ATP synthase subunit c.